Here is a 200-residue protein sequence, read N- to C-terminus: Superoxide dismutase [Mn] 1 (200 aa).

Mn(2+) contacts are provided by His-29, His-76, Asp-158, and His-162.

It belongs to the iron/manganese superoxide dismutase family. Mn(2+) serves as cofactor.

It carries out the reaction 2 superoxide + 2 H(+) = H2O2 + O2. In terms of biological role, destroys superoxide anion radicals which are normally produced within the cells and which are toxic to biological systems. In Haloferax volcanii (strain ATCC 29605 / DSM 3757 / JCM 8879 / NBRC 14742 / NCIMB 2012 / VKM B-1768 / DS2) (Halobacterium volcanii), this protein is Superoxide dismutase [Mn] 1 (sod1).